The following is a 233-amino-acid chain: Phosphoribosylformylglycinamidine synthase subunit PurQ (233 aa).

The Glutamine amidotransferase type-1 domain maps to 9 to 233; it reads RIGIVTFPGS…LSGFLSAFSS (225 aa). The active-site Nucleophile is cysteine 92. Catalysis depends on residues histidine 201 and glutamate 203.

As to quaternary structure, part of the FGAM synthase complex composed of 1 PurL, 1 PurQ and 2 PurS subunits.

It localises to the cytoplasm. It catalyses the reaction N(2)-formyl-N(1)-(5-phospho-beta-D-ribosyl)glycinamide + L-glutamine + ATP + H2O = 2-formamido-N(1)-(5-O-phospho-beta-D-ribosyl)acetamidine + L-glutamate + ADP + phosphate + H(+). It carries out the reaction L-glutamine + H2O = L-glutamate + NH4(+). The protein operates within purine metabolism; IMP biosynthesis via de novo pathway; 5-amino-1-(5-phospho-D-ribosyl)imidazole from N(2)-formyl-N(1)-(5-phospho-D-ribosyl)glycinamide: step 1/2. Functionally, part of the phosphoribosylformylglycinamidine synthase complex involved in the purines biosynthetic pathway. Catalyzes the ATP-dependent conversion of formylglycinamide ribonucleotide (FGAR) and glutamine to yield formylglycinamidine ribonucleotide (FGAM) and glutamate. The FGAM synthase complex is composed of three subunits. PurQ produces an ammonia molecule by converting glutamine to glutamate. PurL transfers the ammonia molecule to FGAR to form FGAM in an ATP-dependent manner. PurS interacts with PurQ and PurL and is thought to assist in the transfer of the ammonia molecule from PurQ to PurL. The polypeptide is Phosphoribosylformylglycinamidine synthase subunit PurQ (Frankia casuarinae (strain DSM 45818 / CECT 9043 / HFP020203 / CcI3)).